A 229-amino-acid chain; its full sequence is MAQQAQLGLQDAASPIMEELIHFHDHTLTVVFLISVLIFYLIIVMVTTTFMNKHSLDSQEVEIVWTVMPAIVLITIALPSLRILYLTDEISNPHLTIKAVGHQWYWSYEYTDYHQMEFDSYMIPTNELEPGGIRLLDVDHRIVVPMESPVRMLITSEDVIHSWTIPSLGTKVDAVPGRLNQATFITTRPGLFFGQCSEICGANHSFMPIALEAVPLSNFENWTTKVLAS.

The Mitochondrial intermembrane segment spans residues methionine 1 to serine 14. Residues proline 15–methionine 45 form a helical membrane-spanning segment. At valine 46–glutamine 59 the chain is on the mitochondrial matrix side. Residues glutamate 60 to threonine 87 traverse the membrane as a helical segment. The Mitochondrial intermembrane segment spans residues aspartate 88–serine 229. 6 residues coordinate Cu cation: histidine 161, cysteine 196, glutamate 198, cysteine 200, histidine 204, and methionine 207. Glutamate 198 contributes to the Mg(2+) binding site.

Belongs to the cytochrome c oxidase subunit 2 family. As to quaternary structure, component of the cytochrome c oxidase (complex IV, CIV), a multisubunit enzyme composed of 14 subunits. The complex is composed of a catalytic core of 3 subunits MT-CO1, MT-CO2 and MT-CO3, encoded in the mitochondrial DNA, and 11 supernumerary subunits COX4I, COX5A, COX5B, COX6A, COX6B, COX6C, COX7A, COX7B, COX7C, COX8 and NDUFA4, which are encoded in the nuclear genome. The complex exists as a monomer or a dimer and forms supercomplexes (SCs) in the inner mitochondrial membrane with NADH-ubiquinone oxidoreductase (complex I, CI) and ubiquinol-cytochrome c oxidoreductase (cytochrome b-c1 complex, complex III, CIII), resulting in different assemblies (supercomplex SCI(1)III(2)IV(1) and megacomplex MCI(2)III(2)IV(2)). Found in a complex with TMEM177, COA6, COX18, COX20, SCO1 and SCO2. Interacts with TMEM177 in a COX20-dependent manner. Interacts with COX20. Interacts with COX16. Cu cation is required as a cofactor.

The protein localises to the mitochondrion inner membrane. The enzyme catalyses 4 Fe(II)-[cytochrome c] + O2 + 8 H(+)(in) = 4 Fe(III)-[cytochrome c] + 2 H2O + 4 H(+)(out). Its function is as follows. Component of the cytochrome c oxidase, the last enzyme in the mitochondrial electron transport chain which drives oxidative phosphorylation. The respiratory chain contains 3 multisubunit complexes succinate dehydrogenase (complex II, CII), ubiquinol-cytochrome c oxidoreductase (cytochrome b-c1 complex, complex III, CIII) and cytochrome c oxidase (complex IV, CIV), that cooperate to transfer electrons derived from NADH and succinate to molecular oxygen, creating an electrochemical gradient over the inner membrane that drives transmembrane transport and the ATP synthase. Cytochrome c oxidase is the component of the respiratory chain that catalyzes the reduction of oxygen to water. Electrons originating from reduced cytochrome c in the intermembrane space (IMS) are transferred via the dinuclear copper A center (CU(A)) of subunit 2 and heme A of subunit 1 to the active site in subunit 1, a binuclear center (BNC) formed by heme A3 and copper B (CU(B)). The BNC reduces molecular oxygen to 2 water molecules using 4 electrons from cytochrome c in the IMS and 4 protons from the mitochondrial matrix. The sequence is that of Cytochrome c oxidase subunit 2 (MT-CO2) from Petromyzon marinus (Sea lamprey).